Consider the following 237-residue polypeptide: Phosphoserine phosphatase (237 aa).

Aspartate 39 (nucleophile) is an active-site residue. Mg(2+) is bound by residues aspartate 39 and glutamate 41. Catalysis depends on glutamate 41, which acts as the Proton donor. Substrate is bound by residues glutamate 47, arginine 78, 122–123, and lysine 165; that span reads SD. Aspartate 184 lines the Mg(2+) pocket. Asparagine 187 provides a ligand contact to substrate.

Belongs to the thrH family. Mg(2+) serves as cofactor.

It carries out the reaction O-phospho-L-serine + H2O = L-serine + phosphate. It catalyses the reaction O-phospho-D-serine + H2O = D-serine + phosphate. It participates in amino-acid biosynthesis; L-serine biosynthesis; L-serine from 3-phospho-D-glycerate: step 3/3. In terms of biological role, phosphoserine phosphatase that mediates dephosphorylation of phosphoserine in the serine biosynthesis pathway. Also able to dephosphorylate phospho-threonine. This chain is Phosphoserine phosphatase, found in Pseudomonas syringae pv. tomato (strain ATCC BAA-871 / DC3000).